We begin with the raw amino-acid sequence, 100 residues long: Replication restart protein PriB (100 aa).

Residues 4–99 (TNLVSLAALI…LRIQNIKEYK (96 aa)) enclose the SSB domain.

It belongs to the PriB family. In terms of assembly, homodimer. Component of the replication restart primosome. Primosome assembly occurs via a 'hand-off' mechanism. PriA binds to replication forks, subsequently PriB then DnaT bind; DnaT then displaces ssDNA to generate the helicase loading substrate. Interacts with PriA with high affinity, independent of DNA presence.

PriA:PriB complex-catalyzed duplex DNA winding is inhibited by CGS 15943 (CHEBI:131351); PriA is the drug target. Functionally, stimulates the DNA unwinding activity of PriA helicase, which does not seem to require single-stranded (ss)DNA-binding by PriB. Activates DNA-dependent ATP hydrolysis catalyzed by PriA. Weakly binds ssDNA. Weakly binds double-stranded (ds)DNA, a partial duplex DNA with a 3' ssDNA overhang, and a forked DNA structure with fully duplex leading and lagging strand arms in vitro. Involved in the restart of stalled replication forks, which reloads the replicative helicase on sites other than the origin of replication; the PriA-PriB pathway is the major replication restart pathway. During primosome assembly it facilitates complex formation between PriA and DnaT on DNA; stabilizes PriA on DNA. Stimulates the DNA unwinding activity of PriA helicase. The protein is Replication restart protein PriB of Neisseria gonorrhoeae (strain ATCC 700825 / FA 1090).